A 453-amino-acid chain; its full sequence is uncharacterized protein (453 aa).

Residues cysteine 74, cysteine 80, cysteine 83, and cysteine 162 each coordinate [4Fe-4S] cluster. Positions 286, 315, 336, and 384 each coordinate S-adenosyl-L-methionine. Cysteine 411 functions as the Nucleophile in the catalytic mechanism.

The protein belongs to the class I-like SAM-binding methyltransferase superfamily. RNA M5U methyltransferase family.

This is an uncharacterized protein from Staphylococcus aureus (strain MRSA252).